A 479-amino-acid polypeptide reads, in one-letter code: Phosphatidylinositol 4-kinase type 2-alpha (479 aa).

Position 1 is an N-acetylmethionine (Met1). The disordered stretch occupies residues Met1–Thr74. 5 positions are modified to phosphoserine: Ser5, Ser9, Ser44, Ser47, and Ser51. The span at Val31 to Gly45 shows a compositional bias: low complexity. Residues Gly53–Arg66 show a composition bias toward basic and acidic residues. In terms of domain architecture, PI3K/PI4K catalytic spans Cys124–Thr453. The tract at residues Ile130–Gly136 is G-loop. Residues Tyr131–Ser137 and Lys152 contribute to the ATP site. The interval Glu157–Tyr159 is important for substrate binding. The tract at residues Lys165 to Cys178 is important for interaction with membranes. Residues Cys174, Cys175, Cys177, and Cys178 are each lipidated (S-palmitoyl cysteine). Residue Gln261–Val264 participates in ATP binding. The segment at Lys268 to Arg276 is important for interaction with membranes. The tract at residues Arg305–Asn313 is catalytic loop. The interval Ala344 to Phe364 is activation loop. Position 346 (Asp346) interacts with ATP. Residues Trp359–Trp368 are important for interaction with membranes. A Phosphoserine modification is found at Ser462.

Belongs to the PI3/PI4-kinase family. Type II PI4K subfamily. In terms of assembly, associates with the BLOC-1 and the AP-3 complexes; the BLOC-1 complex is required for optimal binding of PI4K2A to the AP-3 complex. Interacts with BLOC1S5 and DTNBP1. Interacts with FOS; this interaction may enhance phosphatidylinositol phosphorylation activity. Interacts with ITCH. Interacts with ATG9A. Post-translationally, palmitoylated by ZDHHC3 and ZDHHC7 in the CCPCC motif. Palmitoylation is cholesterol-dependent, and required for TGN localization. Ubiquitinated by ITCH; this does not lead to proteasomal degradation. In terms of tissue distribution, widely expressed. Highest expression is observed in kidney, brain, heart, skeletal muscle, and placenta and lowest expression is observed in colon, thymus, and small intestine.

The protein resides in the golgi apparatus. It is found in the trans-Golgi network membrane. Its subcellular location is the membrane raft. It localises to the cell projection. The protein localises to the dendrite. The protein resides in the presynaptic cell membrane. It is found in the synapse. Its subcellular location is the synaptosome. It localises to the mitochondrion. The protein localises to the endosome. The protein resides in the endosome membrane. It is found in the cytoplasmic vesicle. Its subcellular location is the membrane. It localises to the cell membrane. The protein localises to the perikaryon. The protein resides in the neuron projection. The enzyme catalyses a 1,2-diacyl-sn-glycero-3-phospho-(1D-myo-inositol) + ATP = a 1,2-diacyl-sn-glycero-3-phospho-(1D-myo-inositol 4-phosphate) + ADP + H(+). In terms of biological role, membrane-bound phosphatidylinositol-4 kinase (PI4-kinase) that catalyzes the phosphorylation of phosphatidylinositol (PI) to phosphatidylinositol 4-phosphate (PI4P), a lipid that plays important roles in endocytosis, Golgi function, protein sorting and membrane trafficking and is required for prolonged survival of neurons. Besides, phosphorylation of phosphatidylinositol (PI) to phosphatidylinositol 4-phosphate (PI4P) is the first committed step in the generation of phosphatidylinositol 4,5-bisphosphate (PIP2), a precursor of the second messenger inositol 1,4,5-trisphosphate (InsP3). The chain is Phosphatidylinositol 4-kinase type 2-alpha (PI4K2A) from Homo sapiens (Human).